The primary structure comprises 660 residues: CXXC-type zinc finger protein 1 (660 aa).

Position 1 is an N-acetylmethionine (methionine 1). The span at 1–14 (MEGDGSDLEPPDAG) shows a compositional bias: acidic residues. The segment at 1-20 (MEGDGSDLEPPDAGDDSKSE) is disordered. Phosphoserine occurs at positions 6 and 19. The PHD-type zinc finger occupies 28–76 (YCICRKPDINCFMIGCDNCNEWFHGDCIRITEKMAKAIREWYCRECREK). The segment covering 91–120 (ERDGSERAGSEPRDEGGGRKRPASDPELQR) has biased composition (basic and acidic residues). The segment at 91-166 (ERDGSERAGS…QQQQQQQQQI (76 aa)) is disordered. At serine 124 the chain carries Phosphoserine. A CXXC-type zinc finger spans residues 164–213 (QQIKRSARMCGECEACRRTEDCGHCDFCRDMKKFGGPNKIRQKCRLRQCQ). Positions 173, 176, 179, 185, 188, 191, 207, and 212 each coordinate Zn(2+). Disordered stretches follow at residues 223–287 (FPSS…SDED) and 328–375 (AVKV…DPAS). Position 228 is a phosphoserine (serine 228). Threonine 231 bears the Phosphothreonine mark. Lysine 254 participates in a covalent cross-link: Glycyl lysine isopeptide (Lys-Gly) (interchain with G-Cter in SUMO2). The span at 328–338 (AVKVKHVKRRE) shows a compositional bias: basic residues. The span at 339–349 (KKSEKKKEERY) shows a compositional bias: basic and acidic residues. Positions 350 to 362 (KRHRQKQKHKDKW) are enriched in basic residues. The segment covering 363-372 (KHPERADAKD) has biased composition (basic and acidic residues). Positions 426–479 (AEEHGKKLLERIRREQQSARTRLQEMERRFHELEAIILRAKQQAVREDEENNEN) form a coiled coil.

Component of the SET1 complex, at least composed of the catalytic subunit (SETD1A or SETD1B), WDR5, WDR82, RBBP5, ASH2L/ASH2, CXXC1/CFP1, HCFC1 and DPY30. Interacts with SETD1A. Interacts with ZNF335. Interacts with PRDM9; this interaction does not link PRDM9-activated recombination hotspot sites with DSB machinery and is not required for the hotspot recognition pathway. Interacts with histone H3K4me3. As to expression, expressed in seminiferous tubules and in both germ cells and Sertoli cells. Highly expressed in spermatogonia, weakly expressed in leptonema and zygonema, and then again high expression in pachynema and diplonema, decreasing to undetectable levels in spermatids.

The protein localises to the nucleus speckle. Its subcellular location is the nucleus. Transcriptional activator that exhibits a unique DNA binding specificity for CpG unmethylated motifs with a preference for CpGG. This Mus musculus (Mouse) protein is CXXC-type zinc finger protein 1 (Cxxc1).